Reading from the N-terminus, the 495-residue chain is Putative BTB/POZ domain-containing protein L98 (495 aa).

Positions 15–85 (SDLTIEFVDN…FYGIETTNDY (71 aa)) constitute a BTB domain.

Belongs to the mimivirus BTB/WD family.

This Acanthamoeba polyphaga (Amoeba) protein is Putative BTB/POZ domain-containing protein L98.